A 361-amino-acid chain; its full sequence is POU domain, class 3, transcription factor 4 (361 aa).

Disordered regions lie at residues 99–131 and 144–192; these read PHVA…GQPL and MLEH…PTSD. Positions 119–131 are enriched in polar residues; it reads APNSSITNSGQPL. A compositionally biased stretch (basic and acidic residues) spans 165–183; sequence VLREPPDHGELGSHHCQDH. The region spanning 186–260 is the POU-specific domain; that stretch reads EETPTSDELE…LLNKWLEEAD (75 aa). A Phosphoserine modification is found at Ser265. The segment at residues 278 to 337 is a DNA-binding region (homeobox); it reads KRKKRTSIEVSVKGVLETHFLKCPKPAAQEISSLADSLQLEKEVVRVWFCNRRQKEKRMT. Residues 334-361 are disordered; sequence KRMTPPGDQQPHEVYSHTVKTDASCHDL. The segment covering 343–361 has biased composition (basic and acidic residues); it reads QPHEVYSHTVKTDASCHDL.

The protein belongs to the POU transcription factor family. Class-3 subfamily.

It localises to the nucleus. Its function is as follows. Probable transcription factor which exert its primary action widely during early neural development and in a very limited set of neurons in the mature brain. In Mesocricetus auratus (Golden hamster), this protein is POU domain, class 3, transcription factor 4 (Pou3f4).